Reading from the N-terminus, the 908-residue chain is MGKAAALSRGGGCAGRSRGLSSLFTVVPCLSCHTAAPGMNSSAFGSGPASKPQLQPVQAPERELLSKQVCQPISEPASRSEPGSQTTSVPRPSGVGQESELQGLWPGSENGTRSVSIIKASPELAMPSPLQSTVGSLPVTKPESKLVPKTQSFLRQGQAKISVGTPVSGIGVQMVSPPLDSYKGWLLKWTNYLKGYQRRWFVLGNGLLSYYRNQGEMAHTCRATINLASTHFETEDSCGILLCNGARTYHLKASSEVDRQHWITALELAKAKAIRVMKTQSDDSGDDDEEPAAPADNSELHHTLKTLSLKLNDLSTCNDLIAKHGAALQRSLNELDSLKIPSECGEKLKVVNERATLFRITSNAMINACRDFLELAETHSRKWQRALNYEQEQRVHLEETIEQLAKQHNSLERAFCNTPGGPASSSKSFSEGSFLTSKGENSEEDEDTEYFDAMEDSTSFITVVTEAKEDRKPESGPGTTTVDWTSADNVLDGASFMPKNSCKVKRRVRIPDKPNYSLNLWSIMKNCIGRELSRIPMPVNFNEPLSMLQRLTEDLEYHHLLDKAVNCTSSVEQMCLVAAFSVSSYSTTVHRIAKPFNPMLGETFELDRMEDMGLRSLCEQVSHHPPSAAHHVFSKHGWSLWQEITIASKFRGKYISIMPLGAIHLEFQASGNHYVWRKSTSTVHNIIVGKLWIDQSGDIEIVNHKTKDRCQLKFVPYSYFSKEAARKVTGVVSDSQGKAHYVLSGSWDDQMECSKIVHSSPSSDGRQKTVYQTLPAKLLWRKYPLPENAENMYYFSELALTLNEQEDGVAPTDSRLRPDQRLMERGRWDEANTEKQRLEEKQRLSRRRRLESCTAGCGGEEEKESDGYVPLWFEKRLDPLTGEMACMYKGGYWEAKEKKDWHMCPNIF.

Residues 42–112 (SAFGSGPASK…GLWPGSENGT (71 aa)) form a disordered region. The segment covering 81-90 (EPGSQTTSVP) has biased composition (polar residues). The 93-residue stretch at 179 to 271 (LDSYKGWLLK…WITALELAKA (93 aa)) folds into the PH domain. 3 disordered regions span residues 279–299 (TQSDDSGDDDEEPAAPADNSE), 413–445 (RAFCNTPGGPASSSKSFSEGSFLTSKGENSEED), and 822–843 (LMERGRWDEANTEKQRLEEKQR). Position 284 is a phosphoserine (Ser284). Residues 424–437 (SSSKSFSEGSFLTS) show a composition bias toward low complexity.

This sequence belongs to the OSBP family. Interacts with CCDC159. In terms of tissue distribution, expressed in the testis (at protein level). Expressed in postmeiotic germ cells of the testis.

It localises to the membrane. It is found in the cytoplasmic vesicle. The protein resides in the secretory vesicle. The protein localises to the acrosome. Its function is as follows. Binds 7-ketocholesterol. Acts during spermatid development where its function is required prior to the removal of cytoplasm from the sperm head. This is Oxysterol-binding protein 2 (Osbp2) from Mus musculus (Mouse).